A 190-amino-acid chain; its full sequence is Protein GrpE (190 aa).

The protein belongs to the GrpE family. Homodimer.

Its subcellular location is the cytoplasm. Participates actively in the response to hyperosmotic and heat shock by preventing the aggregation of stress-denatured proteins, in association with DnaK and GrpE. It is the nucleotide exchange factor for DnaK and may function as a thermosensor. Unfolded proteins bind initially to DnaJ; upon interaction with the DnaJ-bound protein, DnaK hydrolyzes its bound ATP, resulting in the formation of a stable complex. GrpE releases ADP from DnaK; ATP binding to DnaK triggers the release of the substrate protein, thus completing the reaction cycle. Several rounds of ATP-dependent interactions between DnaJ, DnaK and GrpE are required for fully efficient folding. The chain is Protein GrpE from Streptococcus agalactiae serotype III (strain NEM316).